Consider the following 223-residue polypeptide: Deoxyribose-phosphate aldolase (223 aa).

The active-site Proton donor/acceptor is D91. Catalysis depends on K153, which acts as the Schiff-base intermediate with acetaldehyde. Residue K182 is the Proton donor/acceptor of the active site.

This sequence belongs to the DeoC/FbaB aldolase family. DeoC type 1 subfamily.

The protein resides in the cytoplasm. The enzyme catalyses 2-deoxy-D-ribose 5-phosphate = D-glyceraldehyde 3-phosphate + acetaldehyde. It functions in the pathway carbohydrate degradation; 2-deoxy-D-ribose 1-phosphate degradation; D-glyceraldehyde 3-phosphate and acetaldehyde from 2-deoxy-alpha-D-ribose 1-phosphate: step 2/2. In terms of biological role, catalyzes a reversible aldol reaction between acetaldehyde and D-glyceraldehyde 3-phosphate to generate 2-deoxy-D-ribose 5-phosphate. In Streptococcus pyogenes serotype M28 (strain MGAS6180), this protein is Deoxyribose-phosphate aldolase.